The following is a 149-amino-acid chain: Pleckstrin homology domain-containing family J member 1 (149 aa).

A PH domain is found at 15–108 (RAEKAAELGM…WVEALTNASY (94 aa)).

This chain is Pleckstrin homology domain-containing family J member 1 (plekhj1), found in Xenopus laevis (African clawed frog).